A 448-amino-acid chain; its full sequence is UDP-N-acetylmuramoylalanine--D-glutamate ligase (448 aa).

112 to 118 (GSNAKST) contacts ATP.

The protein belongs to the MurCDEF family.

Its subcellular location is the cytoplasm. It carries out the reaction UDP-N-acetyl-alpha-D-muramoyl-L-alanine + D-glutamate + ATP = UDP-N-acetyl-alpha-D-muramoyl-L-alanyl-D-glutamate + ADP + phosphate + H(+). It participates in cell wall biogenesis; peptidoglycan biosynthesis. Its function is as follows. Cell wall formation. Catalyzes the addition of glutamate to the nucleotide precursor UDP-N-acetylmuramoyl-L-alanine (UMA). The sequence is that of UDP-N-acetylmuramoylalanine--D-glutamate ligase from Acinetobacter baumannii (strain ACICU).